The following is a 318-amino-acid chain: Thiohydrolase aneE (318 aa).

This sequence belongs to the polyketide transferase af380 family.

The enzyme catalyses aculene D + L-prolyl-[peptidyl-carrier protein] = aculene B + holo-[peptidyl-carrier protein]. It carries out the reaction aculene C + L-prolyl-[peptidyl-carrier protein] = aculene A + holo-[peptidyl-carrier protein]. Its pathway is secondary metabolite biosynthesis. Its function is as follows. Thiohydrolase; part of the gene cluster that mediates the biosynthesis of aculenes, a unique type of norsesquiterpenes that contain a nordaucane skeleton linked to an L-proline moiety and are of mixed biosynthetic origin. The pathway begins with the synthesis of dauca-4,7-diene by the terpene cyclase aneC using farnesyl pyrophosphate (FPP) as substrate. The cytochrome P450 monooxygenase aneF then performs the initial oxidation at C-12 of dauca-4,7-diene to yield asperaculane D. Asperaculane D is substrate of the cytochrome P450 monooxygenase aneD for C-10 hydroxylation to yield asperaculane E. The cytochrome P450 monooxygenase aneG then converts asperaculane E into aculene D via C-2 oxidation. The monomodular nonribosomal peptide synthtase aneB adenylates L-proline and the thiohydrolase aneE transfers this activated L-proline derivative to aculenes D and C to produce respectively aculenes B and A. The dioxygenase aneA converts aculene D into aculene C, and aculene B into aculene A by introducing the 5,6-alkene moiety. Asperculanes A, B, C and F, as well as 14-prolyl asperculane C, might be shunt products of the pathway. This is Thiohydrolase aneE from Aspergillus aculeatus (strain ATCC 16872 / CBS 172.66 / WB 5094).